A 407-amino-acid polypeptide reads, in one-letter code: 41 kDa spicule matrix protein (407 aa).

Positions 1 to 17 (MKGVLFIVASLVAFATG) are cleaved as a signal peptide. Residues 29–160 (SGQSCYRYFN…PGRAPVMKRQ (132 aa)) form the C-type lectin domain. Disordered regions lie at residues 143-176 (PQNP…IPQG) and 204-407 (IGQQ…DALA). The span at 223–369 (NQPGMGGRQP…MGGRQPGMGG (147 aa)) shows a compositional bias: gly residues. Residues 370–398 (QQPNNPNNPNNPNNPNNPNNPNPRFNRPR) show a composition bias toward low complexity.

The protein belongs to the SM50 family. In terms of tissue distribution, expressed specifically in the micromere/primary mesenchyme cells (PMC) lineage.

Its subcellular location is the secreted. Functionally, major matrix protein of the sea urchin embryo spicule which directs crystal growth in certain orientations and inhibit growth in others. In Hemicentrotus pulcherrimus (Sea urchin), this protein is 41 kDa spicule matrix protein.